The primary structure comprises 965 residues: 26S proteasome regulatory subunit rpn2 (965 aa).

10 PC repeats span residues 385–418 (TATA…PSSS), 424–457 (GAFY…EIVQ), 459–493 (GLLL…VAGS), 494–528 (AAGI…EKII), 530–563 (GLGI…TLRY), 564–599 (AGMF…DVRR), 600–632 (AAVC…PHVR), 634–668 (GSAI…FVRQ), 669–699 (GAMI…FEQV), and 712–744 (GATL…SAIV). Disordered stretches follow at residues 826–883 (AKRA…KSET) and 934–965 (NRDA…DDDD). Basic and acidic residues-rich tracts occupy residues 827-856 (KRAE…KEAT) and 874-883 (SKKEEPKSET). A compositionally biased stretch (acidic residues) spans 945-965 (EPGEQEASPPEDFEYPFDDDD). A Phosphoserine modification is found at S952.

The protein belongs to the proteasome subunit S1 family.

Its function is as follows. Acts as a regulatory subunit of the 26S proteasome which is involved in the ATP-dependent degradation of ubiquitinated proteins. The chain is 26S proteasome regulatory subunit rpn2 (rpn2) from Schizosaccharomyces pombe (strain 972 / ATCC 24843) (Fission yeast).